Consider the following 95-residue polypeptide: Aspartyl/glutamyl-tRNA(Asn/Gln) amidotransferase subunit C (95 aa).

This sequence belongs to the GatC family. Heterotrimer of A, B and C subunits.

It carries out the reaction L-glutamyl-tRNA(Gln) + L-glutamine + ATP + H2O = L-glutaminyl-tRNA(Gln) + L-glutamate + ADP + phosphate + H(+). It catalyses the reaction L-aspartyl-tRNA(Asn) + L-glutamine + ATP + H2O = L-asparaginyl-tRNA(Asn) + L-glutamate + ADP + phosphate + 2 H(+). Functionally, allows the formation of correctly charged Asn-tRNA(Asn) or Gln-tRNA(Gln) through the transamidation of misacylated Asp-tRNA(Asn) or Glu-tRNA(Gln) in organisms which lack either or both of asparaginyl-tRNA or glutaminyl-tRNA synthetases. The reaction takes place in the presence of glutamine and ATP through an activated phospho-Asp-tRNA(Asn) or phospho-Glu-tRNA(Gln). This chain is Aspartyl/glutamyl-tRNA(Asn/Gln) amidotransferase subunit C, found in Desulfosudis oleivorans (strain DSM 6200 / JCM 39069 / Hxd3) (Desulfococcus oleovorans).